The chain runs to 360 residues: DNA replication and repair protein RecF (360 aa).

30 to 37 (GQNGSGKT) is a binding site for ATP.

This sequence belongs to the RecF family.

The protein localises to the cytoplasm. Its function is as follows. The RecF protein is involved in DNA metabolism; it is required for DNA replication and normal SOS inducibility. RecF binds preferentially to single-stranded, linear DNA. It also seems to bind ATP. The protein is DNA replication and repair protein RecF of Shewanella baltica (strain OS185).